We begin with the raw amino-acid sequence, 1374 residues long: DNA-directed RNA polymerase subunit beta (1374 aa).

The protein belongs to the RNA polymerase beta chain family. The RNAP catalytic core consists of 2 alpha, 1 beta, 1 beta' and 1 omega subunit. When a sigma factor is associated with the core the holoenzyme is formed, which can initiate transcription.

It carries out the reaction RNA(n) + a ribonucleoside 5'-triphosphate = RNA(n+1) + diphosphate. In terms of biological role, DNA-dependent RNA polymerase catalyzes the transcription of DNA into RNA using the four ribonucleoside triphosphates as substrates. The sequence is that of DNA-directed RNA polymerase subunit beta from Paracidovorax citrulli (strain AAC00-1) (Acidovorax citrulli).